A 577-amino-acid chain; its full sequence is Putative pseudouridine synthase B0024.11 (577 aa).

Aspartate 188 (nucleophile) is an active-site residue. Positions 265 to 472 constitute a TRUD domain; it reads GFINYFGTQR…GESSRCLFVE (208 aa). The segment covering 538–565 has biased composition (basic and acidic residues); the sequence is KAMRDASFKTRGDDEKTEENVLEEKGSD. Positions 538–577 are disordered; that stretch reads KAMRDASFKTRGDDEKTEENVLEEKGSDDANELNLVSEDQ.

It belongs to the pseudouridine synthase TruD family.

It catalyses the reaction a uridine in tRNA = a pseudouridine in tRNA. This Caenorhabditis elegans protein is Putative pseudouridine synthase B0024.11.